A 218-amino-acid polypeptide reads, in one-letter code: ATP phosphoribosyltransferase (218 aa).

The protein belongs to the ATP phosphoribosyltransferase family. Short subfamily. In terms of assembly, heteromultimer composed of HisG and HisZ subunits.

The protein localises to the cytoplasm. The catalysed reaction is 1-(5-phospho-beta-D-ribosyl)-ATP + diphosphate = 5-phospho-alpha-D-ribose 1-diphosphate + ATP. The protein operates within amino-acid biosynthesis; L-histidine biosynthesis; L-histidine from 5-phospho-alpha-D-ribose 1-diphosphate: step 1/9. Catalyzes the condensation of ATP and 5-phosphoribose 1-diphosphate to form N'-(5'-phosphoribosyl)-ATP (PR-ATP). Has a crucial role in the pathway because the rate of histidine biosynthesis seems to be controlled primarily by regulation of HisG enzymatic activity. The chain is ATP phosphoribosyltransferase from Acaryochloris marina (strain MBIC 11017).